We begin with the raw amino-acid sequence, 468 residues long: Serine/threonine-protein phosphatase 2A 55 kDa regulatory subunit B beta isoform (468 aa).

WD repeat units follow at residues 47-86 (SSAD…KNQP), 112-153 (EIEE…KRPE), 196-234 (AHTY…RSFN), 245-285 (ELTE…LCDK), 304-342 (EIIS…RPIE), 359-400 (ENDC…DVTL), and 435-468 (DFSK…DKVN).

It belongs to the phosphatase 2A regulatory subunit B family. As to quaternary structure, PP2A consists of a common heterodimeric core enzyme, composed of a 36 kDa catalytic subunit (subunit C) and a 65 kDa constant regulatory subunit (PR65 or subunit A), that associates with a variety of regulatory subunits.

It is found in the cytoplasm. Its subcellular location is the cytoskeleton. It localises to the membrane. The B regulatory subunit might modulate substrate selectivity and catalytic activity, and might also direct the localization of the catalytic enzyme to a particular subcellular compartment. Negatively controls the initiation of oocyte maturation. The chain is Serine/threonine-protein phosphatase 2A 55 kDa regulatory subunit B beta isoform (ppp2r2b) from Xenopus laevis (African clawed frog).